The primary structure comprises 287 residues: Phosphatidylinositol transfer protein 5 (287 aa).

Positions 252–287 are disordered; it reads FHNNNNNNSNNSNNNNNNNTQPQRSSFFSRSTDGNK. Residues 254-270 are compositionally biased toward low complexity; that stretch reads NNNNNNSNNSNNNNNNN. Residues 271-287 show a composition bias toward polar residues; that stretch reads TQPQRSSFFSRSTDGNK.

It belongs to the PtdIns transfer protein family. PI transfer class IIA subfamily.

Its function is as follows. Phosphatidylinositol transfer proteins mediate the monomeric transport of lipids by shielding a lipid from the aqueous environment and binding the lipid in a hydrophobic cavity. The polypeptide is Phosphatidylinositol transfer protein 5 (pitE) (Dictyostelium discoideum (Social amoeba)).